Reading from the N-terminus, the 590-residue chain is Aspartate--tRNA(Asp/Asn) ligase (590 aa).

Position 175 (Glu175) interacts with L-aspartate. The segment at 199–202 (QQYK) is aspartate. Positions 221 and 450 each coordinate L-aspartate. 221 to 223 (RDE) lines the ATP pocket. Position 484 (Glu484) interacts with ATP. Arg491 provides a ligand contact to L-aspartate. An ATP-binding site is contributed by 536–539 (GVDR).

This sequence belongs to the class-II aminoacyl-tRNA synthetase family. Type 1 subfamily. As to quaternary structure, homodimer.

Its subcellular location is the cytoplasm. The catalysed reaction is tRNA(Asx) + L-aspartate + ATP = L-aspartyl-tRNA(Asx) + AMP + diphosphate. Its function is as follows. Aspartyl-tRNA synthetase with relaxed tRNA specificity since it is able to aspartylate not only its cognate tRNA(Asp) but also tRNA(Asn). Reaction proceeds in two steps: L-aspartate is first activated by ATP to form Asp-AMP and then transferred to the acceptor end of tRNA(Asp/Asn). The chain is Aspartate--tRNA(Asp/Asn) ligase from Nitrobacter winogradskyi (strain ATCC 25391 / DSM 10237 / CIP 104748 / NCIMB 11846 / Nb-255).